Reading from the N-terminus, the 420-residue chain is MEKFRVYGQSTLSGDVQISGAKNAALPILFATILAEEPVKLTNVPELKDVDTTFEILRKLGVVVERTDEQTVLIDASRIDRYVAPYELVKTMRASIWALAPLLTRFREGQVSLPGGCTIGARPVDMHISGLEKMGAAIELDEGYVKATVNGRLTGTRIYMDKVSVGATLSLIMAATLAEGVTTIENAAREPEIVDTADFLNKMGAKISGAGTDTISIEGVSRLAGCEHSIVPDRIETGTFLIAAAISGGRITCHNTKADTLDAVIEKLREAGMQVDVTENTITLDSLGQRPKAVNIRTMPHPGFPTDMQAQFTLLNVVAEGTSKITETIFENRFMHVPELIRMGAKGEIEGNTAIIHGVESLSGAQVMATDLRASISLVLAGCIASGETVVDRIYHIDRGYEHIEDKLRGLGARIERFSE.

22 to 23 is a phosphoenolpyruvate binding site; that stretch reads KN. Position 93 (Arg93) interacts with UDP-N-acetyl-alpha-D-glucosamine. The active-site Proton donor is Cys117. Position 117 is a 2-(S-cysteinyl)pyruvic acid O-phosphothioketal (Cys117). Residues 162 to 165, Asp307, and Ile329 contribute to the UDP-N-acetyl-alpha-D-glucosamine site; that span reads KVSV.

This sequence belongs to the EPSP synthase family. MurA subfamily.

Its subcellular location is the cytoplasm. The catalysed reaction is phosphoenolpyruvate + UDP-N-acetyl-alpha-D-glucosamine = UDP-N-acetyl-3-O-(1-carboxyvinyl)-alpha-D-glucosamine + phosphate. It functions in the pathway cell wall biogenesis; peptidoglycan biosynthesis. Cell wall formation. Adds enolpyruvyl to UDP-N-acetylglucosamine. The protein is UDP-N-acetylglucosamine 1-carboxyvinyltransferase of Actinobacillus succinogenes (strain ATCC 55618 / DSM 22257 / CCUG 43843 / 130Z).